The primary structure comprises 416 residues: Serine hydroxymethyltransferase (416 aa).

(6S)-5,6,7,8-tetrahydrofolate-binding positions include Leu121 and 125 to 127 (GHL). Residue Lys229 is modified to N6-(pyridoxal phosphate)lysine. 354–356 (SPF) contributes to the (6S)-5,6,7,8-tetrahydrofolate binding site.

This sequence belongs to the SHMT family. In terms of assembly, homodimer. It depends on pyridoxal 5'-phosphate as a cofactor.

It is found in the cytoplasm. The catalysed reaction is (6R)-5,10-methylene-5,6,7,8-tetrahydrofolate + glycine + H2O = (6S)-5,6,7,8-tetrahydrofolate + L-serine. Its pathway is one-carbon metabolism; tetrahydrofolate interconversion. It functions in the pathway amino-acid biosynthesis; glycine biosynthesis; glycine from L-serine: step 1/1. In terms of biological role, catalyzes the reversible interconversion of serine and glycine with tetrahydrofolate (THF) serving as the one-carbon carrier. This reaction serves as the major source of one-carbon groups required for the biosynthesis of purines, thymidylate, methionine, and other important biomolecules. Also exhibits THF-independent aldolase activity toward beta-hydroxyamino acids, producing glycine and aldehydes, via a retro-aldol mechanism. The sequence is that of Serine hydroxymethyltransferase from Halorhodospira halophila (strain DSM 244 / SL1) (Ectothiorhodospira halophila (strain DSM 244 / SL1)).